Consider the following 178-residue polypeptide: Adenine phosphoribosyltransferase (178 aa).

This sequence belongs to the purine/pyrimidine phosphoribosyltransferase family. Homodimer.

It is found in the cytoplasm. The enzyme catalyses AMP + diphosphate = 5-phospho-alpha-D-ribose 1-diphosphate + adenine. It functions in the pathway purine metabolism; AMP biosynthesis via salvage pathway; AMP from adenine: step 1/1. Its function is as follows. Catalyzes a salvage reaction resulting in the formation of AMP, that is energically less costly than de novo synthesis. The protein is Adenine phosphoribosyltransferase of Cereibacter sphaeroides (strain KD131 / KCTC 12085) (Rhodobacter sphaeroides).